A 1465-amino-acid polypeptide reads, in one-letter code: DNA polymerase III PolC-type (1465 aa).

The Exonuclease domain maps to 427-583 (YVVFDVETTG…YDAEATGRLL (157 aa)).

It belongs to the DNA polymerase type-C family. PolC subfamily.

The protein resides in the cytoplasm. It carries out the reaction DNA(n) + a 2'-deoxyribonucleoside 5'-triphosphate = DNA(n+1) + diphosphate. Its function is as follows. Required for replicative DNA synthesis. This DNA polymerase also exhibits 3' to 5' exonuclease activity. This chain is DNA polymerase III PolC-type, found in Streptococcus pyogenes serotype M4 (strain MGAS10750).